A 618-amino-acid chain; its full sequence is Sphingomyelin phosphodiesterase 2 (618 aa).

The N-terminal stretch at 1–22 is a signal peptide; it reads MQQPLIILGIGIVLALVSNVES. Residues 68 to 151 enclose the Saposin B-type domain; it reads RKMSCLFCTF…AFIANCGHSD (84 aa). Disulfide bonds link Cys-72–Cys-147, Cys-75–Cys-140, and Cys-103–Cys-114. Asn-89 is a glycosylation site (N-linked (GlcNAc...) asparagine). Residue Asn-159 is glycosylated (N-linked (GlcNAc...) asparagine). Zn(2+) contacts are provided by Asp-189 and His-191. Disulfide bonds link Cys-204-Cys-216 and Cys-217-Cys-249. Asp-278 is a binding site for Zn(2+). Asn-298 is a glycosylation site (N-linked (GlcNAc...) asparagine). Positions 318, 427, 461, and 463 each coordinate Zn(2+). A disulfide bridge connects residues Cys-387 and Cys-435. Asn-525 and Asn-568 each carry an N-linked (GlcNAc...) asparagine glycan. Disulfide bonds link Cys-588/Cys-594 and Cys-600/Cys-613.

The protein belongs to the acid sphingomyelinase family. Zn(2+) serves as cofactor.

Its subcellular location is the secreted. It catalyses the reaction a sphingomyelin + H2O = phosphocholine + an N-acylsphing-4-enine + H(+). The enzyme catalyses an N-acyl-15-methylhexadecasphing-4-enine-1-phosphocholine + H2O = an N-acyl-15-methylhexadecasphing-4-enine + phosphocholine + H(+). It functions in the pathway lipid metabolism; sphingolipid metabolism. Functionally, sphingomyelin phosphodiesterase (sphingomyelinase) that converts sphingomyelin (N-acyl-sphingoid-1-phosphocholine) to ceramide (N-acyl-sphingoid base) and phosphocholine at acidic pH. Displays its enzymatic activity when secreted. May play distinct roles in signaling. The polypeptide is Sphingomyelin phosphodiesterase 2 (asm-2) (Caenorhabditis elegans).